The chain runs to 689 residues: Glycine--tRNA ligase beta subunit (689 aa).

Belongs to the class-II aminoacyl-tRNA synthetase family. In terms of assembly, tetramer of two alpha and two beta subunits.

It localises to the cytoplasm. It catalyses the reaction tRNA(Gly) + glycine + ATP = glycyl-tRNA(Gly) + AMP + diphosphate. The polypeptide is Glycine--tRNA ligase beta subunit (Acinetobacter baumannii (strain ATCC 17978 / DSM 105126 / CIP 53.77 / LMG 1025 / NCDC KC755 / 5377)).